The primary structure comprises 26 residues: Mucus envelope protein (26 aa).

In terms of processing, glycosylated. As to expression, produced by the opercular gland in the gill cavity and secreted as part of the mucus cocoon.

The protein localises to the secreted. Its function is as follows. Exhibits antibacterial activity. May play a role in protection against parasite settlement. This is Mucus envelope protein from Scarus vetula (Queen parrotfish).